The primary structure comprises 264 residues: U1 snRNP-associated protein usp106 (264 aa).

The stretch at 83-126 (DYLEDLERHVDDCNKRIDIAEARREKTKEEEERIDELMRDIIHT) forms a coiled coil. The segment covering 233–258 (EDREKSRDKKDGEKQRDNLASFEDKI) has biased composition (basic and acidic residues). Positions 233–264 (EDREKSRDKKDGEKQRDNLASFEDKISTSFVA) are disordered.

This sequence belongs to the Luc7 family. Component of the U1 snRNP particle, a subcomplex of the spliceosome.

The protein resides in the cytoplasm. It is found in the nucleus. In terms of biological role, component of the U1 snRNP particle, which recognizes and binds the 5'-splice site of pre-mRNA. Together with other non-snRNP factors, U1 snRNP forms the spliceosomal commitment complex, that targets pre-mRNA to the splicing pathway. The sequence is that of U1 snRNP-associated protein usp106 (usp106) from Schizosaccharomyces pombe (strain 972 / ATCC 24843) (Fission yeast).